A 31-amino-acid polypeptide reads, in one-letter code: Cytochrome b6-f complex subunit 6 (31 aa).

The chain crosses the membrane as a helical span at residues 4-26 (ITSYFGFLLAALTITSALLIGLN).

The protein belongs to the PetL family. The 4 large subunits of the cytochrome b6-f complex are cytochrome b6, subunit IV (17 kDa polypeptide, PetD), cytochrome f and the Rieske protein, while the 4 small subunits are PetG, PetL, PetM and PetN. The complex functions as a dimer.

The protein localises to the plastid. The protein resides in the chloroplast thylakoid membrane. Functionally, component of the cytochrome b6-f complex, which mediates electron transfer between photosystem II (PSII) and photosystem I (PSI), cyclic electron flow around PSI, and state transitions. PetL is important for photoautotrophic growth as well as for electron transfer efficiency and stability of the cytochrome b6-f complex. In Amborella trichopoda, this protein is Cytochrome b6-f complex subunit 6.